Reading from the N-terminus, the 1500-residue chain is ABC transporter G family member 42 (1500 aa).

Positions 26 to 56 (VDEAFMPQNSGGGGGSRGRRRSGRGGTADDD) are disordered. The 274-residue stretch at 182-455 (LGLVGVRPGR…FESCGFRCPE (274 aa)) folds into the ABC transporter 1 domain. 215–222 (GPPSSGKT) contacts ATP. An ABC transmembrane type-2 1 domain is found at 533 to 746 (ELLKASFAKE…GYNALAVNEF (214 aa)). A run of 7 helical transmembrane segments spans residues 551 to 571 (FVYIFKTIQLIIVALVASTVF), 584 to 604 (GFVYIGALLFSLIVNMFNGFA), 639 to 659 (IPFSIIESIVWVIVTYYTIGF), 670 to 690 (LLLVFLIQQMAGGLFRATAGL), 695 to 715 (IIAQTGGALALLIFFVLGGFL), 724 to 744 (WWIWGYWVSPLMYGYNALAVN), and 783 to 803 (FWIGAAGLLGFTMFFNVLFTL). A compositionally biased stretch (basic and acidic residues) spans 822-834 (TAKEAEGNGDARH). Residues 822 to 850 (TAKEAEGNGDARHTVRNGSTKSNGGNHKE) are disordered. Over residues 837 to 846 (RNGSTKSNGG) the composition is skewed to polar residues. Residues 894 to 1151 (MSFDDVNYYV…KMIEYFEAIP (258 aa)) form the ABC transporter 2 domain. 939 to 946 (GVSGAGKT) provides a ligand contact to ATP. In terms of domain architecture, ABC transmembrane type-2 2 spans 1224–1438 (GQFRACLWKQ…TVYGLIVTQY (215 aa)). 7 helical membrane passes run 1245-1265 (LVRFSFTLFTALLLGTIFWKI), 1277-1297 (MVIGAMYTAVMFIGINNCATV), 1331-1351 (IPYVFVQTAYYTLIVYAMMSF), 1358-1378 (FFWFFFVSYFSFLYFTYYGMM), 1388-1408 (VAAIFAAAFYSLFNLFSGFFI), 1416-1436 (WWIWYYWLCPLAWTVYGLIVT), and 1472-1492 (VVAPVLVLFAVFFAFMYAICI).

The protein belongs to the ABC transporter superfamily. ABCG family. PDR (TC 3.A.1.205) subfamily.

It localises to the membrane. In terms of biological role, may be a general defense protein. The polypeptide is ABC transporter G family member 42 (Oryza sativa subsp. japonica (Rice)).